The chain runs to 607 residues: Chaperone protein HtpG (607 aa).

Positions 1 to 323 (MKKEEKIFKA…CDSLSLNISR (323 aa)) are a; substrate-binding. The interval 324–534 (EILQQNAELQ…KGGLSLEMEK (211 aa)) is b. The c stretch occupies residues 535 to 607 (TLSEMTNNND…FIKNLNSLIK (73 aa)).

Belongs to the heat shock protein 90 family. In terms of assembly, homodimer.

Its subcellular location is the cytoplasm. Molecular chaperone. Has ATPase activity. The chain is Chaperone protein HtpG from Fusobacterium nucleatum subsp. nucleatum (strain ATCC 25586 / DSM 15643 / BCRC 10681 / CIP 101130 / JCM 8532 / KCTC 2640 / LMG 13131 / VPI 4355).